A 418-amino-acid chain; its full sequence is 3-isopropylmalate dehydratase large subunit 1 (418 aa).

[4Fe-4S] cluster is bound by residues cysteine 298, cysteine 358, and cysteine 361.

The protein belongs to the aconitase/IPM isomerase family. LeuC type 2 subfamily. In terms of assembly, heterodimer of LeuC and LeuD. Requires [4Fe-4S] cluster as cofactor.

It carries out the reaction (2R,3S)-3-isopropylmalate = (2S)-2-isopropylmalate. It functions in the pathway amino-acid biosynthesis; L-leucine biosynthesis; L-leucine from 3-methyl-2-oxobutanoate: step 2/4. Functionally, catalyzes the isomerization between 2-isopropylmalate and 3-isopropylmalate, via the formation of 2-isopropylmaleate. This Thermotoga maritima (strain ATCC 43589 / DSM 3109 / JCM 10099 / NBRC 100826 / MSB8) protein is 3-isopropylmalate dehydratase large subunit 1.